We begin with the raw amino-acid sequence, 61 residues long: Large ribosomal subunit protein uL29 (61 aa).

This sequence belongs to the universal ribosomal protein uL29 family.

The sequence is that of Large ribosomal subunit protein uL29 from Xanthomonas campestris pv. campestris (strain 8004).